The chain runs to 257 residues: RNA polymerase sigma-G factor (257 aa).

The Polymerase core binding motif lies at 66–79; sequence DLFQVGCIGLIKSI. The segment at residues 228–247 is a DNA-binding region (H-T-H motif); it reads QMEVADEIGISQAQVSRLEK.

Belongs to the sigma-70 factor family.

In terms of biological role, sigma factors are initiation factors that promote the attachment of RNA polymerase to specific initiation sites and are then released. This sigma factor is responsible for the expression of sporulation specific genes. The chain is RNA polymerase sigma-G factor (sigG) from Clostridium acetobutylicum (strain ATCC 824 / DSM 792 / JCM 1419 / IAM 19013 / LMG 5710 / NBRC 13948 / NRRL B-527 / VKM B-1787 / 2291 / W).